A 377-amino-acid chain; its full sequence is Pseudouridylate synthase RPUSD4, mitochondrial (377 aa).

Residues 1–46 (MAAPCLRTPGVQLLSMSSRPGRLFTPGSWSFCSSATSSRPLNAQRL) constitute a mitochondrion transit peptide. Residue Asp153 is part of the active site.

This sequence belongs to the pseudouridine synthase RluA family. As to quaternary structure, interacts with 16S mt-rRNA, mt-tRNA(Phe) and mt-tRNA(Met). Forms a regulatory protein-RNA complex, consisting of RCC1L, NGRN, RPUSD3, RPUSD4, TRUB2, FASTKD2 and 16S mt-rRNA.

It is found in the mitochondrion matrix. The protein resides in the nucleus. Its subcellular location is the cytoplasm. The catalysed reaction is uridine in 5S rRNA = pseudouridine in 5S rRNA. The enzyme catalyses a uridine in tRNA = a pseudouridine in tRNA. It carries out the reaction a uridine in mRNA = a pseudouridine in mRNA. Functionally, catalyzes uridine to pseudouridine isomerization (pseudouridylation) of different mitochondrial RNA substrates. Acts on position 1397 in 16S mitochondrial ribosomal RNA (16S mt-rRNA). This modification is required for the assembly of 16S mt-rRNA into a functional mitochondrial ribosome. As a component of a functional protein-RNA module, consisting of RCC1L, NGRN, RPUSD3, RPUSD4, TRUB2, FASTKD2 and 16S mt-rRNA, controls 16S mt-rRNA abundance and is required for intra-mitochondrial translation. Acts on position 39 in mitochondrial tRNA(Phe). Also catalyzes pseudouridylation of mRNAs in nucleus: acts as a regulator of pre-mRNA splicing by mediating pseudouridylation of pre-mRNAs at locations associated with alternatively spliced regions. Pseudouridylation of pre-mRNAs near splice sites directly regulates mRNA splicing and mRNA 3'-end processing. The chain is Pseudouridylate synthase RPUSD4, mitochondrial from Mus musculus (Mouse).